The following is a 433-amino-acid chain: Methylenetetrahydrofolate--tRNA-(uracil-5-)-methyltransferase TrmFO (433 aa).

Residue 8–13 (GAGLAG) participates in FAD binding.

The protein belongs to the MnmG family. TrmFO subfamily. The cofactor is FAD.

The protein resides in the cytoplasm. It catalyses the reaction uridine(54) in tRNA + (6R)-5,10-methylene-5,6,7,8-tetrahydrofolate + NADH + H(+) = 5-methyluridine(54) in tRNA + (6S)-5,6,7,8-tetrahydrofolate + NAD(+). The catalysed reaction is uridine(54) in tRNA + (6R)-5,10-methylene-5,6,7,8-tetrahydrofolate + NADPH + H(+) = 5-methyluridine(54) in tRNA + (6S)-5,6,7,8-tetrahydrofolate + NADP(+). Catalyzes the folate-dependent formation of 5-methyl-uridine at position 54 (M-5-U54) in all tRNAs. The polypeptide is Methylenetetrahydrofolate--tRNA-(uracil-5-)-methyltransferase TrmFO (Carboxydothermus hydrogenoformans (strain ATCC BAA-161 / DSM 6008 / Z-2901)).